The following is a 324-amino-acid chain: Glyoxylate/hydroxypyruvate reductase B (324 aa).

Residues R237 and E266 contribute to the active site. Residue H285 is the Proton donor of the active site.

This sequence belongs to the D-isomer specific 2-hydroxyacid dehydrogenase family. GhrB subfamily. In terms of assembly, homodimer.

Its subcellular location is the cytoplasm. The enzyme catalyses glycolate + NADP(+) = glyoxylate + NADPH + H(+). It catalyses the reaction (R)-glycerate + NAD(+) = 3-hydroxypyruvate + NADH + H(+). It carries out the reaction (R)-glycerate + NADP(+) = 3-hydroxypyruvate + NADPH + H(+). In terms of biological role, catalyzes the NADPH-dependent reduction of glyoxylate and hydroxypyruvate into glycolate and glycerate, respectively. The protein is Glyoxylate/hydroxypyruvate reductase B of Escherichia coli O9:H4 (strain HS).